Reading from the N-terminus, the 72-residue chain is Translation initiation factor IF-1 (72 aa).

The region spanning 1–72 is the S1-like domain; that stretch reads MSKEEAIEVE…TRGRITYRAK (72 aa).

The protein belongs to the IF-1 family. Component of the 30S ribosomal translation pre-initiation complex which assembles on the 30S ribosome in the order IF-2 and IF-3, IF-1 and N-formylmethionyl-tRNA(fMet); mRNA recruitment can occur at any time during PIC assembly.

Its subcellular location is the cytoplasm. In terms of biological role, one of the essential components for the initiation of protein synthesis. Stabilizes the binding of IF-2 and IF-3 on the 30S subunit to which N-formylmethionyl-tRNA(fMet) subsequently binds. Helps modulate mRNA selection, yielding the 30S pre-initiation complex (PIC). Upon addition of the 50S ribosomal subunit IF-1, IF-2 and IF-3 are released leaving the mature 70S translation initiation complex. The polypeptide is Translation initiation factor IF-1 (Geotalea uraniireducens (strain Rf4) (Geobacter uraniireducens)).